Reading from the N-terminus, the 242-residue chain is Ribose-5-phosphate isomerase A (242 aa).

Residues 39–42, 95–98, and 108–111 contribute to the substrate site; these read SGST, DGAD, and KGGG. Catalysis depends on Glu-117, which acts as the Proton acceptor. Lys-135 is a substrate binding site.

Belongs to the ribose 5-phosphate isomerase family. Homodimer.

The enzyme catalyses aldehydo-D-ribose 5-phosphate = D-ribulose 5-phosphate. Its pathway is carbohydrate degradation; pentose phosphate pathway; D-ribose 5-phosphate from D-ribulose 5-phosphate (non-oxidative stage): step 1/1. In terms of biological role, catalyzes the reversible conversion of ribose-5-phosphate to ribulose 5-phosphate. In Chlamydia trachomatis serovar A (strain ATCC VR-571B / DSM 19440 / HAR-13), this protein is Ribose-5-phosphate isomerase A.